A 427-amino-acid polypeptide reads, in one-letter code: 3-phosphoshikimate 1-carboxyvinyltransferase (427 aa).

Residues lysine 22, serine 23, and arginine 27 each coordinate 3-phosphoshikimate. Position 22 (lysine 22) interacts with phosphoenolpyruvate. Glycine 96 and arginine 124 together coordinate phosphoenolpyruvate. Positions 169, 170, 171, 197, 313, 336, and 340 each coordinate 3-phosphoshikimate. Glutamine 171 lines the phosphoenolpyruvate pocket. The active-site Proton acceptor is aspartate 313. Residues arginine 344, arginine 386, and lysine 411 each contribute to the phosphoenolpyruvate site.

It belongs to the EPSP synthase family. Monomer.

It localises to the cytoplasm. It carries out the reaction 3-phosphoshikimate + phosphoenolpyruvate = 5-O-(1-carboxyvinyl)-3-phosphoshikimate + phosphate. It functions in the pathway metabolic intermediate biosynthesis; chorismate biosynthesis; chorismate from D-erythrose 4-phosphate and phosphoenolpyruvate: step 6/7. Functionally, catalyzes the transfer of the enolpyruvyl moiety of phosphoenolpyruvate (PEP) to the 5-hydroxyl of shikimate-3-phosphate (S3P) to produce enolpyruvyl shikimate-3-phosphate and inorganic phosphate. The polypeptide is 3-phosphoshikimate 1-carboxyvinyltransferase (Salmonella typhi).